Consider the following 399-residue polypeptide: Phosphate acyltransferase (399 aa).

It belongs to the PlsX family. In terms of assembly, homodimer. Probably interacts with PlsY.

The protein localises to the cytoplasm. It catalyses the reaction a fatty acyl-[ACP] + phosphate = an acyl phosphate + holo-[ACP]. It functions in the pathway lipid metabolism; phospholipid metabolism. In terms of biological role, catalyzes the reversible formation of acyl-phosphate (acyl-PO(4)) from acyl-[acyl-carrier-protein] (acyl-ACP). This enzyme utilizes acyl-ACP as fatty acyl donor, but not acyl-CoA. In Rhodobacter capsulatus (Rhodopseudomonas capsulata), this protein is Phosphate acyltransferase.